We begin with the raw amino-acid sequence, 157 residues long: Crossover junction endodeoxyribonuclease RuvC (157 aa).

Catalysis depends on residues D7, E67, and D139. Mg(2+) contacts are provided by D7, E67, and D139.

The protein belongs to the RuvC family. As to quaternary structure, homodimer which binds Holliday junction (HJ) DNA. The HJ becomes 2-fold symmetrical on binding to RuvC with unstacked arms; it has a different conformation from HJ DNA in complex with RuvA. In the full resolvosome a probable DNA-RuvA(4)-RuvB(12)-RuvC(2) complex forms which resolves the HJ. Mg(2+) is required as a cofactor.

Its subcellular location is the cytoplasm. It carries out the reaction Endonucleolytic cleavage at a junction such as a reciprocal single-stranded crossover between two homologous DNA duplexes (Holliday junction).. In terms of biological role, the RuvA-RuvB-RuvC complex processes Holliday junction (HJ) DNA during genetic recombination and DNA repair. Endonuclease that resolves HJ intermediates. Cleaves cruciform DNA by making single-stranded nicks across the HJ at symmetrical positions within the homologous arms, yielding a 5'-phosphate and a 3'-hydroxyl group; requires a central core of homology in the junction. The consensus cleavage sequence is 5'-(A/T)TT(C/G)-3'. Cleavage occurs on the 3'-side of the TT dinucleotide at the point of strand exchange. HJ branch migration catalyzed by RuvA-RuvB allows RuvC to scan DNA until it finds its consensus sequence, where it cleaves and resolves the cruciform DNA. This chain is Crossover junction endodeoxyribonuclease RuvC, found in Prochlorococcus marinus subsp. pastoris (strain CCMP1986 / NIES-2087 / MED4).